Reading from the N-terminus, the 466-residue chain is ATP synthase subunit beta (466 aa).

ATP is bound at residue 155-162 (GGAGVGKT).

Belongs to the ATPase alpha/beta chains family. In terms of assembly, F-type ATPases have 2 components, CF(1) - the catalytic core - and CF(0) - the membrane proton channel. CF(1) has five subunits: alpha(3), beta(3), gamma(1), delta(1), epsilon(1). CF(0) has three main subunits: a(1), b(2) and c(9-12). The alpha and beta chains form an alternating ring which encloses part of the gamma chain. CF(1) is attached to CF(0) by a central stalk formed by the gamma and epsilon chains, while a peripheral stalk is formed by the delta and b chains.

Its subcellular location is the cell inner membrane. The catalysed reaction is ATP + H2O + 4 H(+)(in) = ADP + phosphate + 5 H(+)(out). Produces ATP from ADP in the presence of a proton gradient across the membrane. The catalytic sites are hosted primarily by the beta subunits. The chain is ATP synthase subunit beta from Azoarcus sp. (strain BH72).